We begin with the raw amino-acid sequence, 260 residues long: Acyl-coenzyme A diphosphatase FITM2 (260 aa).

At 1-23 (MERLENCAQMFQRRFLNESFRRH) the chain is on the cytoplasmic side. Residues 24–44 (CPVLLACIVLGGSLLKELCPL) form a helical membrane-spanning segment. Residues 45 to 57 (PDSYWNNKRNVLN) are Lumenal-facing. A helical membrane pass occupies residues 58 to 78 (VYFVKFSWGWTLWLLLPFIAL). The Cytoplasmic segment spans residues 79 to 93 (TNYKLTRSTTKVLRR). A helical transmembrane segment spans residues 94–114 (LSSLLVSTLIWYLCTNLFLYI). Topologically, residues 115 to 145 (ENITGSCYESEAMSDPKEHQDRRECRLHSGY) are lumenal. The chain crosses the membrane as a helical span at residues 146–166 (WHGFDISGHCFLLSYCILLIL). The active site involves His-154. The Cytoplasmic segment spans residues 167-189 (EETSIISNIRFERHWHRMAINAQ). 2 helical membrane-spanning segments follow: residues 190–210 (FAALSILVIIWVWMFLCTAVY) and 211–231 (FHNIFQKVIGTAFGILAWYIT). His-212 is a catalytic residue. Residues 232 to 260 (YRWWYLQPISPGLPPASASRSGKEPIYRN) are Cytoplasmic-facing.

The protein belongs to the FIT family. FIT2 subfamily.

It is found in the endoplasmic reticulum membrane. It carries out the reaction an acyl-CoA + H2O = an acyl-4'-phosphopantetheine + adenosine 3',5'-bisphosphate + 2 H(+). Functionally, fatty acyl-coenzyme A (CoA) diphosphatase that hydrolyzes fatty acyl-CoA to yield acyl-4'-phosphopantetheine and adenosine 3',5'-bisphosphate. Preferentially hydrolyzes unsaturated long-chain acyl-CoA substrates in the endoplasmic reticulum (ER) lumen. This catalytic activity is required for maintaining ER structure and for lipid droplets (LDs) biogenesis, which are lipid storage organelles involved in maintaining lipid and energy homeostasis. May directly bind to diacylglycerol (DAGs) and triacylglycerol, which is also important for LD biogenesis. May support directional budding of nacent LDs from the ER into the cytosol by reducing DAG levels at sites of LD formation. May play a role in the regulation of cell morphology, ER morphology and cytoskeletal organization. This Xenopus tropicalis (Western clawed frog) protein is Acyl-coenzyme A diphosphatase FITM2.